The sequence spans 101 residues: Small ribosomal subunit protein uS14A (101 aa).

A disordered region spans residues 29-73; the sequence is AIISSPSTPADARAAAQSELNRQPRDASPVRVRNRDAVDGRPRGH. The segment covering 61–70 has biased composition (basic and acidic residues); it reads RNRDAVDGRP.

Belongs to the universal ribosomal protein uS14 family. As to quaternary structure, part of the 30S ribosomal subunit. Contacts proteins S3 and S10.

Functionally, binds 16S rRNA, required for the assembly of 30S particles and may also be responsible for determining the conformation of the 16S rRNA at the A site. This chain is Small ribosomal subunit protein uS14A, found in Mycolicibacterium gilvum (strain PYR-GCK) (Mycobacterium gilvum (strain PYR-GCK)).